The chain runs to 341 residues: MKSDPVSFDSSHDLMARPRHDWTRVEAETLYTTPFPDLLFQAQTIHRRHFDPNHVETASLLSIKTGGCPEDCGYCAQSAHYDAGVKATKLMDKDAVLETARRAKDAGAGRFCMAAAWRHPKDRDLDRVCDMISAVKALGMETCATLGMLTPEQARRLQEAGLDFYNHNVDTSPEFYDKIITTRTMQDRIETLACAREAGLKLCCGGIIGMGEQVGDRLGMLILLANLDEHPESVPINLWNEVRGVPVNDTADRPDPIALVRMIAVARIMMPKSVVRLSAGRQYMTDELQALCFVAGANSIFIGDVLLTTKNPATLRDAALLDRLGMSSPLDGVKMPAASPS.

The 220-residue stretch at 53-272 folds into the Radical SAM core domain; sequence NHVETASLLS…IAVARIMMPK (220 aa). Residues Cys68, Cys72, and Cys75 each coordinate [4Fe-4S] cluster. [2Fe-2S] cluster-binding residues include Cys112, Cys143, Cys203, and Arg276.

It belongs to the radical SAM superfamily. Biotin synthase family. In terms of assembly, homodimer. The cofactor is [4Fe-4S] cluster. [2Fe-2S] cluster serves as cofactor.

The enzyme catalyses (4R,5S)-dethiobiotin + (sulfur carrier)-SH + 2 reduced [2Fe-2S]-[ferredoxin] + 2 S-adenosyl-L-methionine = (sulfur carrier)-H + biotin + 2 5'-deoxyadenosine + 2 L-methionine + 2 oxidized [2Fe-2S]-[ferredoxin]. It functions in the pathway cofactor biosynthesis; biotin biosynthesis; biotin from 7,8-diaminononanoate: step 2/2. Catalyzes the conversion of dethiobiotin (DTB) to biotin by the insertion of a sulfur atom into dethiobiotin via a radical-based mechanism. This is Biotin synthase from Nitrobacter winogradskyi (strain ATCC 25391 / DSM 10237 / CIP 104748 / NCIMB 11846 / Nb-255).